We begin with the raw amino-acid sequence, 237 residues long: DNA repair protein RecO (237 aa).

It belongs to the RecO family.

Functionally, involved in DNA repair and RecF pathway recombination. The protein is DNA repair protein RecO of Rickettsia conorii (strain ATCC VR-613 / Malish 7).